The chain runs to 236 residues: 2-C-methyl-D-erythritol 4-phosphate cytidylyltransferase (236 aa).

It belongs to the IspD/TarI cytidylyltransferase family. IspD subfamily. Homodimer.

The catalysed reaction is 2-C-methyl-D-erythritol 4-phosphate + CTP + H(+) = 4-CDP-2-C-methyl-D-erythritol + diphosphate. Its pathway is isoprenoid biosynthesis; isopentenyl diphosphate biosynthesis via DXP pathway; isopentenyl diphosphate from 1-deoxy-D-xylulose 5-phosphate: step 2/6. Catalyzes the formation of 4-diphosphocytidyl-2-C-methyl-D-erythritol from CTP and 2-C-methyl-D-erythritol 4-phosphate (MEP). This is 2-C-methyl-D-erythritol 4-phosphate cytidylyltransferase from Salmonella heidelberg (strain SL476).